Consider the following 345-residue polypeptide: Biotin synthase (345 aa).

The Radical SAM core domain maps to 49–276 (NQVQMSTLLS…ASFVRLSAGR (228 aa)). [4Fe-4S] cluster is bound by residues Cys64, Cys68, and Cys71. [2Fe-2S] cluster is bound by residues Cys108, Cys139, Cys199, and Arg271.

It belongs to the radical SAM superfamily. Biotin synthase family. As to quaternary structure, homodimer. [4Fe-4S] cluster serves as cofactor. [2Fe-2S] cluster is required as a cofactor.

The catalysed reaction is (4R,5S)-dethiobiotin + (sulfur carrier)-SH + 2 reduced [2Fe-2S]-[ferredoxin] + 2 S-adenosyl-L-methionine = (sulfur carrier)-H + biotin + 2 5'-deoxyadenosine + 2 L-methionine + 2 oxidized [2Fe-2S]-[ferredoxin]. Its pathway is cofactor biosynthesis; biotin biosynthesis; biotin from 7,8-diaminononanoate: step 2/2. Its function is as follows. Catalyzes the conversion of dethiobiotin (DTB) to biotin by the insertion of a sulfur atom into dethiobiotin via a radical-based mechanism. This Nitrosococcus oceani (strain ATCC 19707 / BCRC 17464 / JCM 30415 / NCIMB 11848 / C-107) protein is Biotin synthase.